The chain runs to 278 residues: Dermonecrotic toxin LhSicTox-alphaIV1iii (278 aa).

His-5 is a catalytic residue. Residues Glu-25 and Asp-27 each contribute to the Mg(2+) site. Catalysis depends on His-41, which acts as the Nucleophile. Disulfide bonds link Cys-45/Cys-51 and Cys-47/Cys-192. Asp-85 is a binding site for Mg(2+).

The protein belongs to the arthropod phospholipase D family. Class II subfamily. The cofactor is Mg(2+). In terms of tissue distribution, expressed by the venom gland.

It localises to the secreted. It carries out the reaction an N-(acyl)-sphingosylphosphocholine = an N-(acyl)-sphingosyl-1,3-cyclic phosphate + choline. The enzyme catalyses an N-(acyl)-sphingosylphosphoethanolamine = an N-(acyl)-sphingosyl-1,3-cyclic phosphate + ethanolamine. The catalysed reaction is a 1-acyl-sn-glycero-3-phosphocholine = a 1-acyl-sn-glycero-2,3-cyclic phosphate + choline. It catalyses the reaction a 1-acyl-sn-glycero-3-phosphoethanolamine = a 1-acyl-sn-glycero-2,3-cyclic phosphate + ethanolamine. Functionally, dermonecrotic toxins cleave the phosphodiester linkage between the phosphate and headgroup of certain phospholipids (sphingolipid and lysolipid substrates), forming an alcohol (often choline) and a cyclic phosphate. This toxin acts on sphingomyelin (SM). It may also act on ceramide phosphoethanolamine (CPE), lysophosphatidylcholine (LPC) and lysophosphatidylethanolamine (LPE), but not on lysophosphatidylserine (LPS), and lysophosphatidylglycerol (LPG). It acts by transphosphatidylation, releasing exclusively cyclic phosphate products as second products. Induces dermonecrosis, hemolysis, increased vascular permeability, edema, inflammatory response, and platelet aggregation. The chain is Dermonecrotic toxin LhSicTox-alphaIV1iii from Loxosceles hirsuta (Recluse spider).